A 174-amino-acid polypeptide reads, in one-letter code: Large ribosomal subunit protein uL16 (174 aa).

This sequence belongs to the universal ribosomal protein uL16 family.

This chain is Large ribosomal subunit protein uL16, found in Archaeoglobus fulgidus (strain ATCC 49558 / DSM 4304 / JCM 9628 / NBRC 100126 / VC-16).